The following is a 262-amino-acid chain: R3H domain-containing protein 4 (262 aa).

Disordered stretches follow at residues 1 to 27 (MVAL…PGCL) and 132 to 155 (YLED…RRED). A compositionally biased stretch (basic and acidic residues) spans 146–155 (GRGEDRRRED). Residues 182-245 (METLESWEER…RRQMKVSNRH (64 aa)) enclose the R3H domain.

Its subcellular location is the nucleus. This Mus musculus (Mouse) protein is R3H domain-containing protein 4 (R3hdm4).